We begin with the raw amino-acid sequence, 60 residues long: Short neurotoxin 1 (60 aa).

4 disulfides stabilise this stretch: C3–C22, C17–C39, C41–C52, and C53–C58.

Belongs to the three-finger toxin family. Short-chain subfamily. Type I alpha-neurotoxin sub-subfamily. Expressed by the venom gland.

The protein localises to the secreted. In terms of biological role, binds to muscle nicotinic acetylcholine receptor (nAChR) and inhibit acetylcholine from binding to the receptor, thereby impairing neuromuscular transmission. The chain is Short neurotoxin 1 from Hydrophis cyanocinctus (Asian annulated sea snake).